We begin with the raw amino-acid sequence, 236 residues long: Predicted GPI-anchored protein 43 (236 aa).

A signal peptide spans 1–24; that stretch reads MHQRNHHSILLTLLLYLQSIVALA. 3 N-linked (GlcNAc...) asparagine glycosylation sites follow: Asn192, Asn195, and Asn198. Gly208 is lipidated: GPI-anchor amidated glycine. Positions 209 to 236 are cleaved as a propeptide — removed in mature form; that stretch reads SVCLTSSYLNSPIIILCAILTGTLFAMY.

The protein localises to the cell membrane. In Candida albicans (strain SC5314 / ATCC MYA-2876) (Yeast), this protein is Predicted GPI-anchored protein 43 (PGA43).